A 66-amino-acid chain; its full sequence is Surface composition regulator (66 aa).

Belongs to the GlgS family.

In terms of biological role, major determinant of cell surface composition. Negatively regulates motility, adhesion and synthesis of biofilm exopolysaccharides. This is Surface composition regulator from Escherichia coli O139:H28 (strain E24377A / ETEC).